A 66-amino-acid chain; its full sequence is FMRFamide-like neuropeptide 21 (66 aa).

The signal sequence occupies residues 1-16 (MRLFILLSCLLAWVLA).

Belongs to the FARP (FMRFamide related peptide) family. Post-translationally, may be processed by convertase egl-3. Expressed in the ADL, ASE and ASH sensory neurons, the URA motor neurons and the MC, M2 and M4 pharyngeal neurons.

The protein resides in the secreted. In terms of biological role, FMRFamide-like neuropeptide. Involved in modulating locomotion quiescence during the sleep-like state called lethargus which occurs during molting between larval and adult stages, acting via the G-protein coupled receptor npr-1. Plays a role in modulating social and feeding behavior. Its function is as follows. Ligand to G-protein coupled receptor npr-1. The protein is FMRFamide-like neuropeptide 21 of Caenorhabditis elegans.